A 624-amino-acid polypeptide reads, in one-letter code: Galactan 5-O-arabinofuranosyltransferase (624 aa).

13 consecutive transmembrane segments (helical) span residues 5 to 25 (VLGQ…VAIA), 43 to 63 (ALTT…GLLW), 73 to 93 (LGAL…PLGA), 127 to 147 (IGLP…IAAA), 159 to 179 (WSIV…AAMI), 181 to 201 (FEYA…YAST), 203 to 223 (PYAA…WAGL), 234 to 254 (AIVG…LLLV), 280 to 300 (LAVI…PYLL), 326 to 346 (FPMF…VWLV), 355 to 375 (AGAL…SMLT), 391 to 411 (LTVL…LAIA), and 422 to 442 (VVAA…QDIP).

The protein belongs to the glycosyltransferase 85 family.

Its subcellular location is the cell membrane. The catalysed reaction is Adds an alpha-D-arabinofuranosyl group from trans,octacis-decaprenylphospho-beta-D-arabinofuranose at the 5-O-position of the eighth, tenth and twelfth galactofuranose unit of the galactofuranan chain of [beta-D-galactofuranosyl-(1-&gt;5)-beta-D-galactofuranosyl-(1-&gt;6)]14-beta-D-galactofuranosyl-(1-&gt;5)-beta-D-galactofuranosyl-(1-&gt;4)-alpha-L-rhamnopyranosyl-(1-&gt;3)-N-acetyl-alpha-D-glucosaminyl-diphospho-trans,octacis-decaprenol.. It functions in the pathway cell wall biogenesis; cell wall polysaccharide biosynthesis. Its function is as follows. Involved in the biosynthesis of the arabinogalactan (AG) region of the mycolylarabinogalactan-peptidoglycan (mAGP) complex, an essential component of the mycobacterial cell wall. Catalyzes the addition of the first key arabinofuranosyl (Araf) residue from the sugar donor decaprenyl-phospho-arabinose (DPA) on the C-5 of a 6-linked galactofuranosyl (Galf) of the galactan domain, thus 'priming' the galactan for further elaboration by other arabinofuranosyltransferases. It is not able to add an Araf residue to a terminal Galf. The polypeptide is Galactan 5-O-arabinofuranosyltransferase (Mycolicibacterium smegmatis (strain ATCC 700084 / mc(2)155) (Mycobacterium smegmatis)).